The primary structure comprises 724 residues: Disks large homolog 4 (724 aa).

S-palmitoyl cysteine attachment occurs at residues Cys-3 and Cys-5. Residues 15 to 35 are disordered; sequence QDEDTPPLEHSPAHLPNQANS. PDZ domains lie at 65-151 and 160-246; these read EITL…VMRR and EIKL…VAKP. Phosphoserine is present on residues Ser-73 and Ser-142. At Tyr-240 the chain carries Phosphotyrosine. Ser-295 is subject to Phosphoserine. Positions 313–393 constitute a PDZ 3 domain; the sequence is RIVIHRGSTG…QTVTIIAQYK (81 aa). Ser-415 and Ser-418 each carry phosphoserine. Thr-420 bears the Phosphothreonine mark. A phosphoserine mark is found at Ser-422, Ser-425, Ser-449, and Ser-480. Positions 428 to 498 constitute an SH3 domain; that stretch reads KRGFYIRALF…PSKRRVERRE (71 aa). Residues 534-709 form the Guanylate kinase-like domain; it reads ARPIIILGPT…IYHKVKRVIE (176 aa). A Phosphotyrosine modification is found at Tyr-580. Phosphoserine is present on residues Ser-606 and Ser-654. Residue Tyr-715 is modified to Phosphotyrosine.

The protein belongs to the MAGUK family. Interacts through its PDZ domains with ANO2 and NETO1. Interacts with KCNJ4. Interacts through its first two PDZ domains with GRIN2A, GRIN2B, GRIN2C and GRIN2D. Interacts with ERBB4. Interacts with KCNA1, KCNA2, KCNA3 and KCNA4. Interacts with LRRC4 and LRRC4B. Interacts with SYNGAP1. Interacts with ASIC3. Interacts with SEMA4C. Interacts with CXADR. Interacts with KCND2. Interacts (via first PDZ domain) with CRIPT. Interacts through its first PDZ domain with GRIK2 and KCNA4. Interacts through its second PDZ domain with the PDZ domain of NOS1 or the C-terminus of CAPON. Interacts through its third PDZ domain with NLGN1 and CRIPT, and probably with NLGN2 and NLGN3. Interacts through its guanylate kinase-like domain with DLGAP1/GKAP, DLGAP2, DLGAP3, DLGAP4, MAP1A, BEGAIN and SIPA1L1. Interacts through its guanylate kinase-like domain with KIF13B. Isoform 2 interacts through an L27 domain with HGS/HRS and the first L27 domain of CASK. Interacts with ANKS1B. Interacts with ADR1B. May interact with HTR2A. Interacts with ADAM22, KLHL17 and LGI1. Interacts with FRMPD4 (via C-terminus). Interacts with LRFN1 and LRFN2. Interacts with LRFN4. Interacts (via N-terminal tandem pair of PDZ domains) with GPER1 (via C-terminus tail motif); the interaction is direct and induces the increase of GPER1 protein levels residing at the plasma membrane surface in a estradiol-independent manner. Interacts (via N-terminus tandem pair of PDZ domains) with NOS1 (via N-terminal domain). Interacts with SHANK3. Interacts with GPR85. Interacts with CACNG2 and MPP2 (via the SH3-Guanylate kinase-like sub-module). Interacts with ADGRB1. Found in a complex with PRR7 and GRIN1. Interacts (via PDZ3 domain and to lesser degree via PDZ2 domain) with PRR7. Component of the postsynaptic hippocampal AMPA-type glutamate receptor (AMPAR) complex, at least composed of pore forming AMPAR subunits GRIA1, GRIA2 and GRIA3 and AMPAR auxiliary proteins SHISA6 and SHISA7. Interacts (via its first two PDZ domains) with SHISA6 and SHISA7 (via PDZ-binding motif); the interaction is direct. Interacts (via PDZ domain 2) with SEMA4F (via PDZ-binding motif); this interaction may promote translocation of DLG4/SAP90 to the membrane. Interacts with RPH3A and GRIN2A; this ternary complex regulates NMDA receptor composition at postsynaptic membranes. Interacts with ABR and BCR. Interacts with DGKI (via PDZ-binding motif); controls the localization of DGKI to the synapse. Interacts with C9orf72, SMCR8 and RAB39B. Interacts with ZDHHC5. Interacts with PTEN (via PDZ domain-binding motif); the interaction is induced by NMDA and is required for PTEN location at postsynaptic density. Found in a complex with GRIA1, GRIA2, GRIA3, GRIA4, CACNG8 and CNIH2. Interacts with FAM81A; the interaction facilitates condensate formation via liquid-liquid phase separation. Interacts with ADGRL3. Interacts with SORCS3. Palmitoylated. Palmitoylation is required for targeting to postsynaptic density, plasma membrane and synapses. Palmitoylation by ZDHHC2 occurs when the synaptic activity decreases and induces DLG4 synaptic clustering. Palmitoylation by ZDHHC15 regulates trafficking to the postsynaptic density and function in synaptogenesis. Palmitoylation may play a role in glutamate receptor GRIA1 synapse clustering. Depalmitoylated by ABHD17A and ABHD17B and to a lesser extent by ABHD17C, ABHD12, ABHD13, LYPLA1 and LYPLA2. Undergoes rapid synaptic palmitoylation/depalmitoylation cycle during neuronal development which slows down in mature neurons. Post-translationally, ubiquitinated by MDM2 in response to NMDA receptor activation, leading to proteasome-mediated degradation of DLG4 which is required for AMPA receptor endocytosis. As to expression, expressed in brain (at protein level). Detected in juxtaparanodal zones in the central nervous system and at nerve terminal plexuses of basket cells in the cerebellum. Expressed in cerebrum. Expressed in hippocampal neurons (at protein level). Isoform 1 and isoform 2: highly expressed in cerebellum, cortex, hippocampus, and corpus striatum.

The protein resides in the cell membrane. It localises to the postsynaptic density. The protein localises to the synapse. It is found in the cytoplasm. Its subcellular location is the cell projection. The protein resides in the axon. It localises to the dendritic spine. The protein localises to the dendrite. It is found in the presynapse. In terms of biological role, postsynaptic scaffolding protein that plays a critical role in synaptogenesis and synaptic plasticity by providing a platform for the postsynaptic clustering of crucial synaptic proteins. Interacts with the cytoplasmic tail of NMDA receptor subunits and shaker-type potassium channels. Required for synaptic plasticity associated with NMDA receptor signaling. Overexpression or depletion of DLG4 changes the ratio of excitatory to inhibitory synapses in hippocampal neurons. May reduce the amplitude of ASIC3 acid-evoked currents by retaining the channel intracellularly. May regulate the intracellular trafficking of ADR1B. Also regulates AMPA-type glutamate receptor (AMPAR) immobilization at postsynaptic density keeping the channels in an activated state in the presence of glutamate and preventing synaptic depression. Under basal conditions, cooperates with FYN to stabilize palmitoyltransferase ZDHHC5 at the synaptic membrane through FYN-mediated phosphorylation of ZDHHC5 and its subsequent inhibition of association with endocytic proteins. The chain is Disks large homolog 4 from Rattus norvegicus (Rat).